Reading from the N-terminus, the 693-residue chain is Protein FAM13A (693 aa).

Residue serine 19 is modified to Phosphoserine. Disordered stretches follow at residues 56-89 (SNAG…KKQD) and 136-233 (RSKP…VPDM). Positions 69–78 (GPSSASSIPT) are enriched in polar residues. Residues 159 to 171 (LSMESLSSMQSQE) show a composition bias toward low complexity. The span at 184-197 (ESKEIERGGRDTQH) shows a compositional bias: basic and acidic residues. A phosphoserine mark is found at serine 267 and serine 287. Disordered stretches follow at residues 302–331 (DTEV…DEQE) and 396–424 (ISEE…EKED). Phosphoserine is present on serine 397. Threonine 402 is modified (phosphothreonine). Residues 408–418 (RSNTLPKSFGS) are compositionally biased toward polar residues.

This sequence belongs to the FAM13 family. As to quaternary structure, interacts with ANXA2. In terms of tissue distribution, expressed in the mammary gland, with similar levels at all stages of development, including pregnancy, lactation and involution.

In terms of biological role, (Microbial infection) Plays a role in the clearance of Pseudomonas aeruginosa by macrophages. In complex with ANXA2, promotes activation of Rho GTPases following P.aeruginosa infection. This chain is Protein FAM13A (Fam13a), found in Mus musculus (Mouse).